The sequence spans 337 residues: Nodulation protein D 2 (337 aa).

An HTH lysR-type domain is found at 6–63; the sequence is LDLNLLVVLDSLMTARNLTAAARSINLSQPAMSAAVARLRAYFGDELFTMRGRTLVPT. The segment at residues 23–42 is a DNA-binding region (H-T-H motif); that stretch reads LTAAARSINLSQPAMSAAVA.

It belongs to the LysR transcriptional regulatory family.

Its function is as follows. NodD regulates the expression of the nodABCFE genes which encode other nodulation proteins. NodD is also a negative regulator of its own expression. Binds flavonoids as inducers. This is Nodulation protein D 2 (nodD2) from Bradyrhizobium sp. (strain NC92).